The chain runs to 1503 residues: Dynein axonemal assembly factor 1 homolog (1503 aa).

LRR repeat units follow at residues 34 to 56 (RLND…EEYT), 57 to 78 (ELKC…EKLG), 79 to 100 (KLKC…DPCR), 101 to 122 (ELDT…GTNI), 125 to 146 (VLNT…SDLI), and 150 to 171 (TLSV…KIFE). The LRRCT domain occupies 185–223 (PVVSRLPQYRKTLILACKELTYLDSRPVFPRDRACAEAW). 4 disordered regions span residues 249-280 (SINC…DDTC), 305-328 (EQPI…TSSQ), 956-1033 (DSGD…DHDE), and 1295-1315 (STNN…STSE). A compositionally biased stretch (acidic residues) spans 973-985 (TESEDYDTAEDEY). The segment covering 1014–1031 (QKQDKPDTVEEVGKKNDH) has biased composition (basic and acidic residues). Positions 1303–1314 (TKKTLPTKTSTS) are enriched in low complexity.

This sequence belongs to the DNAAF1 family.

It is found in the cell projection. The protein localises to the cilium. Cilium-specific protein required for cilia structures. This chain is Dynein axonemal assembly factor 1 homolog (dtr), found in Drosophila erecta (Fruit fly).